The sequence spans 396 residues: Purine ribonucleoside efflux pump NepI (396 aa).

The Cytoplasmic segment spans residues 1-21; sequence MSEFIAENRGANAITRPNWSA. A helical membrane pass occupies residues 22–42; it reads VFSVAFCVACLIIVEFLPVSL. Topologically, residues 43-54 are periplasmic; that stretch reads LTPMAQDLGISE. A helical membrane pass occupies residues 55–75; sequence GVAGQSVTVTAFVAMFASLFI. Over 76-85 the chain is Cytoplasmic; that stretch reads TQTIQATDRR. The chain crosses the membrane as a helical span at residues 86–106; sequence YVVILFAVLLTLSCLLVSFAN. S107 is a topological domain (periplasmic). The helical transmembrane segment at 108 to 128 threads the bilayer; it reads FSLLLIGRACLGVALGGFWAI. The Cytoplasmic portion of the chain corresponds to 129-147; sequence SASLTMRLVPPRTVPKALS. The helical transmembrane segment at 148-168 threads the bilayer; the sequence is VIFGAVSIALVIAAPLGSFLG. Topologically, residues 169-175 are periplasmic; sequence ELIGWRN. Residues 176 to 196 form a helical membrane-spanning segment; that stretch reads VFNAAAAMGVLCIFWIIKSLP. Topologically, residues 197-215 are cytoplasmic; the sequence is SLPGEPSHQKQNTFRLLQR. A helical transmembrane segment spans residues 216–236; that stretch reads PGVMAGMIAIFMSFAGQFAFF. Residues 237–255 are Periplasmic-facing; that stretch reads TYIRPVYMNLAGFGVDGLT. A helical membrane pass occupies residues 256–276; sequence LVLLSFGIASFVGTSLSSFIL. The Cytoplasmic portion of the chain corresponds to 277 to 281; that stretch reads KRSVK. Residues 282–302 form a helical membrane-spanning segment; the sequence is LALAGAPFVLALSALVLTLWG. The Periplasmic segment spans residues 303 to 305; it reads SDK. A helical transmembrane segment spans residues 306 to 326; sequence IVATGVAIIWGLTFALIPVGW. At 327-343 the chain is on the cytoplasmic side; that stretch reads STWITRSLADQAEKAGS. A helical membrane pass occupies residues 344–364; it reads IQVAVIQLANTCGAAIGGYAL. Topologically, residues 365–366 are periplasmic; the sequence is DN. Residues 367–387 traverse the membrane as a helical segment; that stretch reads IGLTSPLMLSGTLMLLTALLV. Residues 388–396 are Cytoplasmic-facing; that stretch reads TAKVKMKKS.

The protein belongs to the major facilitator superfamily. DHA1 family. NepI (TC 2.A.1.2.26) subfamily.

It localises to the cell inner membrane. It carries out the reaction inosine(in) + H(+)(out) = inosine(out) + H(+)(in). The catalysed reaction is guanosine(in) + H(+)(out) = guanosine(out) + H(+)(in). In terms of biological role, involved in the efflux of purine ribonucleosides, such as inosine and guanosine. In Escherichia coli O6:K15:H31 (strain 536 / UPEC), this protein is Purine ribonucleoside efflux pump NepI.